We begin with the raw amino-acid sequence, 401 residues long: Putative TRAP transporter large permease protein HI_0050 (401 aa).

The next 11 membrane-spanning stretches (helical) occupy residues 31-51 (FPLMAIPFFMLTGEIMKHGGI), 70-90 (LGYVAIISGLIFAGLSGSAVA), 115-135 (GLICAAGIISVVIPPSIPMII), 144-164 (ITKLFMGGTVPGLLMVVGLWV), 193-213 (AFWPLLLPIIIIVGLRGGIFT), 217-237 (AGVVAAIYAGIVSIAYKGLTF), 253-273 (MVMFVAASAMISAFAITVAQI), 290-310 (ILMFIIMLFLLLVGCVMDLIP), 330-350 (IAYFGIMMVINLSIGLITPPV), 353-373 (VLYVGSGISKLGIGALSKGIA), and 375-395 (FLFVYAIIMMLIVFFPEIVIV).

It belongs to the TRAP transporter large permease family.

It is found in the cell inner membrane. The protein is Putative TRAP transporter large permease protein HI_0050 of Haemophilus influenzae (strain ATCC 51907 / DSM 11121 / KW20 / Rd).